A 907-amino-acid polypeptide reads, in one-letter code: Avirulence protein A (907 aa).

Composition is skewed to polar residues over residues 1–11 (MWNVSKSSNNL) and 124–136 (AGSN…SSDP). Disordered stretches follow at residues 1-47 (MWNV…HDQL) and 116-157 (NDDF…KKSY).

This Pseudomonas savastanoi pv. glycinea (Pseudomonas syringae pv. glycinea) protein is Avirulence protein A (avrA).